The chain runs to 345 residues: Cuticle collagen 14 (345 aa).

Triple-helical region stretches follow at residues 156–185, 207–263, and 268–333; these read GPPG…PGPP, GDGG…PGTY, and GPAG…PGSC. The segment at 161–345 is disordered; that stretch reads AGDGGRDGAD…CPPARLAPGY (185 aa). 3 stretches are compositionally biased toward pro residues: residues 179–191, 198–223, and 278–290; these read IGPP…PGPD, PQCP…PPGA, and RPGP…PAGP. Positions 292–304 are enriched in gly residues; the sequence is GENGKGGGQGPSG.

The protein belongs to the cuticular collagen family. In terms of assembly, collagen polypeptide chains are complexed within the cuticle by disulfide bonds and other types of covalent cross-links.

Nematode cuticles are composed largely of collagen-like proteins. The cuticle functions both as an exoskeleton and as a barrier to protect the worm from its environment. The chain is Cuticle collagen 14 (col-14) from Caenorhabditis elegans.